The primary structure comprises 212 residues: Adenylate kinase (212 aa).

ATP is bound at residue 10–15; the sequence is GAGKGT. Positions 30–59 are NMP; that stretch reads ALGDIFRTIIKTSTSEAELINNYVKQGELV. AMP contacts are provided by residues R36, 57 to 59, 85 to 88, and Q92; these read ELV and GYPR. Positions 122-160 are LID; sequence GRYSCKNCRKIYNSYFLQPKTDNVCDVCGSSTFDYRKDD. ATP is bound at residue R123. Residues C126 and C129 each contribute to the Zn(2+) site. ATP is bound at residue 132–133; it reads IY. C146 and C149 together coordinate Zn(2+). AMP-binding residues include R157 and R168. Residue K196 coordinates ATP.

It belongs to the adenylate kinase family. Monomer.

It localises to the cytoplasm. It catalyses the reaction AMP + ATP = 2 ADP. Its pathway is purine metabolism; AMP biosynthesis via salvage pathway; AMP from ADP: step 1/1. Its function is as follows. Catalyzes the reversible transfer of the terminal phosphate group between ATP and AMP. Plays an important role in cellular energy homeostasis and in adenine nucleotide metabolism. This chain is Adenylate kinase, found in Rickettsia akari (strain Hartford).